The sequence spans 202 residues: Recombination protein RecR (202 aa).

The C4-type zinc finger occupies 56-71 (CVVCGTVSDKEHCRIC). The region spanning 79–179 (TVICVVEEPK…TVSRLASGLP (101 aa)) is the Toprim domain.

It belongs to the RecR family.

Functionally, may play a role in DNA repair. It seems to be involved in an RecBC-independent recombinational process of DNA repair. It may act with RecF and RecO. This is Recombination protein RecR from Rhodococcus jostii (strain RHA1).